The following is a 178-amino-acid chain: Endothelin-2 (178 aa).

A signal peptide spans 1-24 (MVSVPTAWCSVALALLVALHEGKD). A propeptide spanning residues 25–46 (QAAATLEQPASSPRARAAHLRL) is cleaved from the precursor. Disulfide bonds link cysteine 49–cysteine 63 and cysteine 51–cysteine 59. Residues 70-178 (VNTPGQTAPY…RTTHSRHRKR (109 aa)) constitute a propeptide that is removed on maturation. The tract at residues 96–111 (CECSSARDPACATFCH) is endothelin-like. The interval 154–178 (KTHFAKRQQEATREPRTTHSRHRKR) is disordered. Residues 160-170 (RQQEATREPRT) are compositionally biased toward basic and acidic residues.

It belongs to the endothelin/sarafotoxin family.

It localises to the secreted. In terms of biological role, endothelins are endothelium-derived vasoconstrictor peptides. The sequence is that of Endothelin-2 (EDN2) from Oryctolagus cuniculus (Rabbit).